We begin with the raw amino-acid sequence, 270 residues long: Plasmanylethanolamine desaturase 1 (270 aa).

The next 3 helical transmembrane spans lie at 47–67 (WCSV…LLLL), 74–94 (PLVI…SGLV), and 161–181 (ALEQ…FGTF). Positions 186–190 (HKWSH) match the Histidine box-1 motif. The Histidine box-2 motif lies at 213–217 (HHRIH).

Belongs to the fatty acid desaturase CarF family.

The protein resides in the endoplasmic reticulum membrane. The enzyme catalyses a 1-(1,2-saturated alkyl)-2-acyl-sn-glycero-3-phosphoethanolamine + 2 Fe(II)-[cytochrome b5] + O2 + 2 H(+) = a 1-O-(1Z-alkenyl)-2-acyl-sn-glycero-3-phosphoethanolamine + 2 Fe(III)-[cytochrome b5] + 2 H2O. The catalysed reaction is a 1-O-hexadecyl-2-acyl-sn-glycero-3-phosphoethanolamine + 2 Fe(II)-[cytochrome b5] + O2 + 2 H(+) = a 1-O-(1Z-hexadecenyl)-2-acyl-sn-glycero-3-phosphoethanolamine + 2 Fe(III)-[cytochrome b5] + 2 H2O. It carries out the reaction a 1-O-octadecyl-2-acyl-sn-glycero-3-phosphoethanolamine + 2 Fe(II)-[cytochrome b5] + O2 + 2 H(+) = a 1-O-(1Z-octadecenyl)-2-acyl-sn-glycero-3-phosphoethanolamine + 2 Fe(III)-[cytochrome b5] + 2 H2O. It catalyses the reaction a 1-O-(9Z-octadecenyl)-2-acyl-sn-glycero-3-phosphoethanolamine + 2 Fe(II)-[cytochrome b5] + O2 + 2 H(+) = a 1-O-(1Z,9Z-octadecadienyl)-2-acyl-sn-glycero-3-phosphoethanolamine + 2 Fe(III)-[cytochrome b5] + 2 H2O. It functions in the pathway lipid metabolism; fatty acid metabolism. Plasmanylethanolamine desaturase involved in plasmalogen biogenesis in the endoplasmic reticulum membrane. Plasmalogens are glycerophospholipids with a hydrocarbon chain linked by a vinyl ether bond at the glycerol sn-1 position, and are involved in antioxidative and signaling mechanisms. This chain is Plasmanylethanolamine desaturase 1, found in Homo sapiens (Human).